A 577-amino-acid polypeptide reads, in one-letter code: Arginine--tRNA ligase (577 aa).

Positions 123 to 133 match the 'HIGH' region motif; the sequence is PNLAKEMHVGH.

The protein belongs to the class-I aminoacyl-tRNA synthetase family. In terms of assembly, monomer.

It localises to the cytoplasm. The enzyme catalyses tRNA(Arg) + L-arginine + ATP = L-arginyl-tRNA(Arg) + AMP + diphosphate. The protein is Arginine--tRNA ligase of Marinomonas sp. (strain MWYL1).